The chain runs to 693 residues: tRNA (guanine(27)-N(2))-dimethyltransferase (693 aa).

Residues 95-99 (HKLRR) carry the Nucleolar localization signal motif. The segment at 144-166 (YHCIICSATITRRTDMLGHVRRH) adopts a C2H2-type zinc-finger fold. Positions 187–648 (EILKEADTDV…APLMQFKSIL (462 aa)) constitute a Trm1 methyltransferase domain. S-adenosyl-L-methionine is bound by residues Arg220, Asp267, Asp317, and Ala318. The Zn(2+) site is built by Cys448, Cys451, Cys473, and Cys475. A Glycyl lysine isopeptide (Lys-Gly) (interchain with G-Cter in SUMO2) cross-link involves residue Lys545. Ser572 and Ser667 each carry phosphoserine.

This sequence belongs to the class I-like SAM-binding methyltransferase superfamily. Trm1 family.

It is found in the nucleus. The protein resides in the nucleolus. The enzyme catalyses guanosine(27) in tRNA(Tyr) + 2 S-adenosyl-L-methionine = N(2)-dimethylguanosine(27) in tRNA(Tyr) + 2 S-adenosyl-L-homocysteine + 2 H(+). In terms of biological role, specifically dimethylates a single guanine residue at position 27 of tRNA(Tyr) using S-adenosyl-L-methionine as donor of the methyl groups. Dimethylation at position 27 of tRNA(Tyr) is required for efficient translation of tyrosine codons. Also required to maintain 3-(3-amino-3-carboxypropyl)uridine (acp3U) in the D-loop of several cytoplasmic tRNAs. This is tRNA (guanine(27)-N(2))-dimethyltransferase (TRMT1L) from Macaca fascicularis (Crab-eating macaque).